Consider the following 277-residue polypeptide: Thiamine thiazole synthase (277 aa).

NAD(+) is bound by residues Ser-36, Gly-63, Val-126, and 152–154 (HVD). 2 residues coordinate Fe cation: Asp-154 and His-169. Met-230 provides a ligand contact to NAD(+). Residue Arg-240 coordinates glycine.

This sequence belongs to the THI4 family. Homooctamer; tetramer of dimers. The cofactor is Fe(2+).

The enzyme catalyses hydrogen sulfide + glycine + NAD(+) = ADP-5-ethyl-4-methylthiazole-2-carboxylate + nicotinamide + 3 H2O + H(+). It functions in the pathway cofactor biosynthesis; thiamine diphosphate biosynthesis. Involved in the biosynthesis of the thiazole moiety of thiamine. Catalyzes the conversion of NAD and glycine to adenosine diphosphate 5-(2-hydroxyethyl)-4-methylthiazole-2-carboxylate (ADT), an adenylated thiazole intermediate, using free sulfide as a source of sulfur. The sequence is that of Thiamine thiazole synthase from Fervidobacterium nodosum (strain ATCC 35602 / DSM 5306 / Rt17-B1).